A 564-amino-acid polypeptide reads, in one-letter code: Proline--tRNA ligase (564 aa).

This sequence belongs to the class-II aminoacyl-tRNA synthetase family. ProS type 1 subfamily. Homodimer.

It localises to the cytoplasm. The catalysed reaction is tRNA(Pro) + L-proline + ATP = L-prolyl-tRNA(Pro) + AMP + diphosphate. Its function is as follows. Catalyzes the attachment of proline to tRNA(Pro) in a two-step reaction: proline is first activated by ATP to form Pro-AMP and then transferred to the acceptor end of tRNA(Pro). As ProRS can inadvertently accommodate and process non-cognate amino acids such as alanine and cysteine, to avoid such errors it has two additional distinct editing activities against alanine. One activity is designated as 'pretransfer' editing and involves the tRNA(Pro)-independent hydrolysis of activated Ala-AMP. The other activity is designated 'posttransfer' editing and involves deacylation of mischarged Ala-tRNA(Pro). The misacylated Cys-tRNA(Pro) is not edited by ProRS. The polypeptide is Proline--tRNA ligase (Bacillus velezensis (strain DSM 23117 / BGSC 10A6 / LMG 26770 / FZB42) (Bacillus amyloliquefaciens subsp. plantarum)).